The sequence spans 363 residues: Glutamate 5-kinase (363 aa).

An ATP-binding site is contributed by lysine 6. Substrate contacts are provided by serine 46, aspartate 133, and asparagine 145. ATP contacts are provided by residues 165 to 166 and 207 to 213; these read TD and TGGMHTK. One can recognise a PUA domain in the interval 271-349; it reads TGRLLLDEGA…RDIEAVLGFT (79 aa).

Belongs to the glutamate 5-kinase family.

The protein localises to the cytoplasm. It catalyses the reaction L-glutamate + ATP = L-glutamyl 5-phosphate + ADP. Its pathway is amino-acid biosynthesis; L-proline biosynthesis; L-glutamate 5-semialdehyde from L-glutamate: step 1/2. Its function is as follows. Catalyzes the transfer of a phosphate group to glutamate to form L-glutamate 5-phosphate. This chain is Glutamate 5-kinase, found in Deinococcus geothermalis (strain DSM 11300 / CIP 105573 / AG-3a).